The sequence spans 231 residues: Large ribosomal subunit protein uL1 (231 aa).

It belongs to the universal ribosomal protein uL1 family. As to quaternary structure, part of the 50S ribosomal subunit.

Binds directly to 23S rRNA. The L1 stalk is quite mobile in the ribosome, and is involved in E site tRNA release. Its function is as follows. Protein L1 is also a translational repressor protein, it controls the translation of the L11 operon by binding to its mRNA. The chain is Large ribosomal subunit protein uL1 from Chromobacterium violaceum (strain ATCC 12472 / DSM 30191 / JCM 1249 / CCUG 213 / NBRC 12614 / NCIMB 9131 / NCTC 9757 / MK).